A 94-amino-acid polypeptide reads, in one-letter code: Na(+)/H(+) antiporter subunit F (94 aa).

Transmembrane regions (helical) follow at residues 2–22 (FTLILQIALGIMAVSTFLYVI), 34–54 (VVALDAIGINLIAITALVSIL), and 59–79 (AFLDIILLLGILSFIGTIAFS).

This sequence belongs to the CPA3 antiporters (TC 2.A.63) subunit F family. Forms a heterooligomeric complex that consists of seven subunits: MrpA, MrpB, MrpC, MrpD, MrpE, MrpF and MrpG.

It localises to the cell membrane. Functionally, mrp complex is a Na(+)/H(+) antiporter that is considered to be the major Na(+) excretion system in B.subtilis. Has a major role in Na(+) resistance and a minor role in Na(+)- and K(+)-dependent pH homeostasis as compared to TetB. MrpA may be the actual Na(+)/H(+) antiporter, although the six other Mrp proteins are all required for Na(+)/H(+) antiport activity and Na(+) resistance. MrpA is required for initiation of sporulation when external Na(+) concentration increases. Also transports Li(+) but not K(+), Ca(2+) or Mg(2+). In terms of biological role, involved in cholate and Na(+) efflux activities, which may be mechanistically coupled. Does not require other Mrp proteins for its own function. The chain is Na(+)/H(+) antiporter subunit F (mrpF) from Bacillus subtilis (strain 168).